A 215-amino-acid chain; its full sequence is Sodium channel regulatory subunit beta-2 (215 aa).

An N-terminal signal peptide occupies residues 1-29 (MHRDAWLPRPAFSLTGLSLFFSLVPPGRS). Topologically, residues 30–157 (MEVTVPATLN…MEEPPERDST (128 aa)) are extracellular. The Ig-like C2-type domain maps to 32–154 (VTVPATLNVL…QVLMEEPPER (123 aa)). Residues asparagine 42, asparagine 66, and asparagine 74 are each glycosylated (N-linked (GlcNAc...) asparagine). Disulfide bonds link cysteine 50-cysteine 127 and cysteine 72-cysteine 75. The chain crosses the membrane as a helical span at residues 158–179 (VAVIVGASVGGFLAVVILVLMV). Residues 180-215 (VKCVRRKKEQKLSTDDLKTEEEGKTDGEGNPDDGAK) lie on the Cytoplasmic side of the membrane. A disordered region spans residues 187–215 (KEQKLSTDDLKTEEEGKTDGEGNPDDGAK). The span at 189–215 (QKLSTDDLKTEEEGKTDGEGNPDDGAK) shows a compositional bias: basic and acidic residues. Serine 192 is subject to Phosphoserine. Threonine 204 is modified (phosphothreonine).

Belongs to the sodium channel auxiliary subunit SCN2B (TC 8.A.17) family. As to quaternary structure, a voltage-gated sodium (Nav) channel consists of an ion-conducting pore-forming alpha subunit functional on its own that is regulated by one or more beta subunits. The beta subunit SCN2B is disulfide-linked to the pore-forming alpha subunit. Interacts with SCN1A; regulatory subunit of SCN1A/Nav1.1. Interacts with SCN2A; regulatory subunit of SCN2A/Nav1.2. Interacts with SCN3A; regulatory subunit of SCN3A/Nav1.3. Interacts with SCN5A; regulatory subunit of SCN5A/Nav1.5. Interacts with SCN8A; regulatory subunit of SCN8A/Nav1.6. Interacts with SCN9A; regulatory subunit of SCN9A/Nav1.7. Interacts with SCN10A; regulatory subunit of SCN10A/Nav1.8. Interacts with TNR; may play a crucial role in clustering and regulation of activity of SCN2B-containing Nav channels at nodes of Ranvier.

It is found in the cell membrane. The protein localises to the cell projection. The protein resides in the axon. In terms of biological role, regulatory subunit of multiple voltage-gated sodium (Nav) channels directly mediating the depolarization of excitable membranes. Navs, also called VGSCs (voltage-gated sodium channels) or VDSCs (voltage-dependent sodium channels), operate by switching between closed and open conformations depending on the voltage difference across the membrane. In the open conformation they allow Na(+) ions to selectively pass through the pore, along their electrochemical gradient. The influx of Na+ ions provokes membrane depolarization, initiating the propagation of electrical signals throughout cells and tissues. The accessory beta subunits participate in localization and functional modulation of the Nav channels. Modulates the activity of SCN1A/Nav1.1, SCN2A/Nav1.2, SCN2A/Nav1.3, SCN5A/Nav1.5, SCN8A/Nav1.6, SCN9A/Nav1.7 and SCN10A/Nav1.8. The chain is Sodium channel regulatory subunit beta-2 from Homo sapiens (Human).